We begin with the raw amino-acid sequence, 192 residues long: 21.7 kDa class VI heat shock protein (192 aa).

Residues 80-192 form the sHSP domain; it reads SLRSLGQCRV…IPKINSKNKF (113 aa).

The protein belongs to the small heat shock protein (HSP20) family. May form oligomeric structures.

The protein localises to the cytoplasm. This Arabidopsis thaliana (Mouse-ear cress) protein is 21.7 kDa class VI heat shock protein (HSP21.7).